Reading from the N-terminus, the 203-residue chain is Arcadin-2 (203 aa).

In terms of assembly, interacts with crenactin.

It is found in the cytoplasm. The protein localises to the cytoskeleton. Functionally, part of an actin-like archaeal cytoskeleton. Prevents polymerization of crenactin filaments by binding its C-terminus into crenactin's hydrophobic groove. May act by competing with the D-loop of the following crenactin subunit for the hydrophobic groove. This Pyrobaculum calidifontis (strain DSM 21063 / JCM 11548 / VA1) protein is Arcadin-2.